A 285-amino-acid chain; its full sequence is Shikimate dehydrogenase (NADP(+)) (285 aa).

Shikimate-binding positions include 21–23 and T68; that span reads SRS. Catalysis depends on K72, which acts as the Proton acceptor. Residue E83 participates in NADP(+) binding. Shikimate is bound by residues N92 and D107. NADP(+) contacts are provided by residues 132-136, 156-161, and L221; these read GAGGS and NRTMER. Residue Y223 participates in shikimate binding. G244 serves as a coordination point for NADP(+).

The protein belongs to the shikimate dehydrogenase family. Homodimer.

The enzyme catalyses shikimate + NADP(+) = 3-dehydroshikimate + NADPH + H(+). The protein operates within metabolic intermediate biosynthesis; chorismate biosynthesis; chorismate from D-erythrose 4-phosphate and phosphoenolpyruvate: step 4/7. Involved in the biosynthesis of the chorismate, which leads to the biosynthesis of aromatic amino acids. Catalyzes the reversible NADPH linked reduction of 3-dehydroshikimate (DHSA) to yield shikimate (SA). The protein is Shikimate dehydrogenase (NADP(+)) of Nitrobacter hamburgensis (strain DSM 10229 / NCIMB 13809 / X14).